The chain runs to 246 residues: Ribonuclease 3 (246 aa).

An RNase III domain is found at 8–137; sequence ANRLKTRLGF…LLGAIYLDQG (130 aa). Glutamate 50 is a Mg(2+) binding site. Aspartate 54 is an active-site residue. 2 residues coordinate Mg(2+): aspartate 123 and glutamate 126. The active site involves glutamate 126. Residues 164 to 233 form the DRBM domain; the sequence is DYKTELQEIL…AKDAFQHLEG (70 aa). The disordered stretch occupies residues 212–246; the sequence is SGHSKKEAEQQAAKDAFQHLEGMGKSGHKSAGPIR.

Belongs to the ribonuclease III family. As to quaternary structure, homodimer. Mg(2+) serves as cofactor.

It is found in the cytoplasm. It carries out the reaction Endonucleolytic cleavage to 5'-phosphomonoester.. In terms of biological role, digests double-stranded RNA. Involved in the processing of primary rRNA transcript to yield the immediate precursors to the large and small rRNAs (23S and 16S). Processes some mRNAs, and tRNAs when they are encoded in the rRNA operon. Processes pre-crRNA and tracrRNA of type II CRISPR loci if present in the organism. The polypeptide is Ribonuclease 3 (Desulforamulus reducens (strain ATCC BAA-1160 / DSM 100696 / MI-1) (Desulfotomaculum reducens)).